Consider the following 150-residue polypeptide: Urease subunit beta (150 aa).

Low complexity predominate over residues 122–140 (GAVVGDSPAATPGTTGATG). A disordered region spans residues 122–150 (GAVVGDSPAATPGTTGATGDLPGYLGEGS).

It belongs to the urease beta subunit family. In terms of assembly, heterotrimer of UreA (gamma), UreB (beta) and UreC (alpha) subunits. Three heterotrimers associate to form the active enzyme.

Its subcellular location is the cytoplasm. The catalysed reaction is urea + 2 H2O + H(+) = hydrogencarbonate + 2 NH4(+). It functions in the pathway nitrogen metabolism; urea degradation; CO(2) and NH(3) from urea (urease route): step 1/1. This is Urease subunit beta from Frankia alni (strain DSM 45986 / CECT 9034 / ACN14a).